Reading from the N-terminus, the 367-residue chain is Phosphoribosylformylglycinamidine cyclo-ligase (367 aa).

The protein belongs to the AIR synthase family.

Its subcellular location is the cytoplasm. The catalysed reaction is 2-formamido-N(1)-(5-O-phospho-beta-D-ribosyl)acetamidine + ATP = 5-amino-1-(5-phospho-beta-D-ribosyl)imidazole + ADP + phosphate + H(+). Its pathway is purine metabolism; IMP biosynthesis via de novo pathway; 5-amino-1-(5-phospho-D-ribosyl)imidazole from N(2)-formyl-N(1)-(5-phospho-D-ribosyl)glycinamide: step 2/2. The sequence is that of Phosphoribosylformylglycinamidine cyclo-ligase from Cyanothece sp. (strain PCC 7425 / ATCC 29141).